Reading from the N-terminus, the 205-residue chain is Urease accessory protein UreG (205 aa).

GTP is bound at residue 10–17; it reads GPVGAGKT.

It belongs to the SIMIBI class G3E GTPase family. UreG subfamily. In terms of assembly, homodimer. UreD, UreF and UreG form a complex that acts as a GTP-hydrolysis-dependent molecular chaperone, activating the urease apoprotein by helping to assemble the nickel containing metallocenter of UreC. The UreE protein probably delivers the nickel.

Its subcellular location is the cytoplasm. Its function is as follows. Facilitates the functional incorporation of the urease nickel metallocenter. This process requires GTP hydrolysis, probably effectuated by UreG. The polypeptide is Urease accessory protein UreG (Corynebacterium glutamicum (strain ATCC 13032 / DSM 20300 / JCM 1318 / BCRC 11384 / CCUG 27702 / LMG 3730 / NBRC 12168 / NCIMB 10025 / NRRL B-2784 / 534)).